A 333-amino-acid polypeptide reads, in one-letter code: Homeobox protein HMX1 (333 aa).

3 disordered regions span residues 1 to 74 (MAQD…STSA), 86 to 109 (GTEG…APRC), and 139 to 204 (CASP…KKKT). Positions 17–30 (DYTQGNTDRSTAAA) are enriched in polar residues. Residues 87–105 (TEGGGGTRRAAAGGGGGRG) show a composition bias toward gly residues. A compositionally biased stretch (basic and acidic residues) spans 144-158 (TSDRDSPELPEDTER). Positions 159–176 (AGGGGRAAARGPAGGRQS) are enriched in gly residues. Over residues 181-192 (EEEEERGEEAGE) the composition is skewed to acidic residues. Residues 201–260 (KKKTRTVFSRSQVFQLESTFDVKRYLSSSERAGLAASLHLTETQVKIWFQNRRNKWKRQL) constitute a DNA-binding region (homeobox). The HMX family specific domain 1 motif lies at 261–271 (AADLEAANLSH).

The protein belongs to the HMX homeobox family.

Its subcellular location is the nucleus. Its function is as follows. DNA-binding protein that binds to the 5'-CAAG-3' core sequence. May function as a transcriptional repressor. Seems to act as a transcriptional antagonist of NKX2-5. May play an important role in the development of craniofacial structures such as the eye and ear. This chain is Homeobox protein HMX1 (HMX1), found in Gallus gallus (Chicken).